Reading from the N-terminus, the 211-residue chain is Regulator of G-protein signaling 2 (211 aa).

The segment at 32–66 (KMKRTLLKDWKTRLSYFLQNSSAPGKPKTGKKSKQ) is necessary for membrane association. The tract at residues 79–116 (LWAEAFDELLASKYGLAAFRAFLKSEFCEENIEFWLAC) is necessary to inhibit protein synthesis. The RGS domain maps to 83–199 (AFDELLASKY…LESEFYQDLC (117 aa)).

In terms of assembly, interacts with GNAQ. Does not interact with GNAI1 and GNAI3. Interacts with EIF2B5. Interacts with PRKG1 (isoform alpha). In terms of processing, phosphorylated by protein kinase C. Phosphorylation by PRKG1 leads to activation of RGS2 activity. As to expression, expressed in a wide variety of tissues.

Its subcellular location is the cell membrane. It is found in the cytoplasm. It localises to the nucleus. The protein localises to the nucleolus. Its function is as follows. Regulates G protein-coupled receptor signaling cascades. Inhibits signal transduction by increasing the GTPase activity of G protein alpha subunits, thereby driving them into their inactive GDP-bound form. It is involved in the negative regulation of the angiotensin-activated signaling pathway. Plays a role in the regulation of blood pressure in response to signaling via G protein-coupled receptors and GNAQ. Plays a role in regulating the constriction and relaxation of vascular smooth muscle. Binds EIF2B5 and blocks its activity, thereby inhibiting the translation of mRNA into protein. This is Regulator of G-protein signaling 2 (Rgs2) from Mus musculus (Mouse).